The primary structure comprises 205 residues: Thiamine-phosphate synthase (205 aa).

4-amino-2-methyl-5-(diphosphooxymethyl)pyrimidine is bound by residues 35 to 39 (QYRDK) and N67. 2 residues coordinate Mg(2+): D68 and D86. Residue T105 participates in 4-amino-2-methyl-5-(diphosphooxymethyl)pyrimidine binding. Residue 132–134 (SQT) participates in 2-[(2R,5Z)-2-carboxy-4-methylthiazol-5(2H)-ylidene]ethyl phosphate binding. 4-amino-2-methyl-5-(diphosphooxymethyl)pyrimidine is bound at residue K135. G162 serves as a coordination point for 2-[(2R,5Z)-2-carboxy-4-methylthiazol-5(2H)-ylidene]ethyl phosphate.

Belongs to the thiamine-phosphate synthase family. Requires Mg(2+) as cofactor.

It carries out the reaction 2-[(2R,5Z)-2-carboxy-4-methylthiazol-5(2H)-ylidene]ethyl phosphate + 4-amino-2-methyl-5-(diphosphooxymethyl)pyrimidine + 2 H(+) = thiamine phosphate + CO2 + diphosphate. The enzyme catalyses 2-(2-carboxy-4-methylthiazol-5-yl)ethyl phosphate + 4-amino-2-methyl-5-(diphosphooxymethyl)pyrimidine + 2 H(+) = thiamine phosphate + CO2 + diphosphate. It catalyses the reaction 4-methyl-5-(2-phosphooxyethyl)-thiazole + 4-amino-2-methyl-5-(diphosphooxymethyl)pyrimidine + H(+) = thiamine phosphate + diphosphate. It participates in cofactor biosynthesis; thiamine diphosphate biosynthesis; thiamine phosphate from 4-amino-2-methyl-5-diphosphomethylpyrimidine and 4-methyl-5-(2-phosphoethyl)-thiazole: step 1/1. Its function is as follows. Condenses 4-methyl-5-(beta-hydroxyethyl)thiazole monophosphate (THZ-P) and 2-methyl-4-amino-5-hydroxymethyl pyrimidine pyrophosphate (HMP-PP) to form thiamine monophosphate (TMP). The protein is Thiamine-phosphate synthase of Pseudomonas syringae pv. tomato (strain ATCC BAA-871 / DC3000).